Consider the following 186-residue polypeptide: MSESAAQEIPMSRRQLLSFVTGGAIAATTAATLYPVVLYFLPPSTAGGGEGVAAKDKEGKDISVSKLLAAATPGEPVLTLGLDVNGGDATYIVINDQKEIANFGINAVCTHLGCVVPWDNGAKQFKCPCHGSVYNADGGLERGPAPQPLALVKATVSDDKVLIAPWTEQDFRCTDLWCNKDPYWVK.

The chain crosses the membrane as a helical span at residues 16–38 (LLSFVTGGAIAATTAATLYPVVL). The Rieske domain maps to 74-163 (GEPVLTLGLD…ATVSDDKVLI (90 aa)). [2Fe-2S] cluster is bound by residues Cys109, His111, Cys127, and His130. Cys114 and Cys129 form a disulfide bridge.

Belongs to the Rieske iron-sulfur protein family. The 4 large subunits of the cytochrome b6-f complex are cytochrome b6, subunit IV (17 kDa polypeptide, PetD), cytochrome f and the Rieske protein, while the 4 small subunits are PetG, PetL, PetM and PetN. The complex functions as a dimer. [2Fe-2S] cluster is required as a cofactor.

The protein resides in the cell inner membrane. It carries out the reaction 2 oxidized [plastocyanin] + a plastoquinol + 2 H(+)(in) = 2 reduced [plastocyanin] + a plastoquinone + 4 H(+)(out). Its function is as follows. Component of the cytochrome b6-f complex, which mediates electron transfer between photosystem II (PSII) and photosystem I (PSI), cyclic electron flow around PSI, and state transitions. The polypeptide is Cytochrome b6-f complex iron-sulfur subunit (Gloeobacter violaceus (strain ATCC 29082 / PCC 7421)).